Consider the following 118-residue polypeptide: Down syndrome critical region protein 4 (118 aa).

Positions M1–S39 are disordered. Low complexity predominate over residues S28 to S39.

In terms of tissue distribution, mainly expressed in placenta.

The protein is Down syndrome critical region protein 4 (DSCR4) of Homo sapiens (Human).